Here is a 230-residue protein sequence, read N- to C-terminus: Orotidine 5'-phosphate decarboxylase (230 aa).

Substrate is bound by residues Asp11, Lys34, 61-70 (DLKLHDIPNT), Thr117, Arg179, Gln188, Gly208, and Arg209. The active-site Proton donor is the Lys63.

The protein belongs to the OMP decarboxylase family. Type 1 subfamily. In terms of assembly, homodimer.

The catalysed reaction is orotidine 5'-phosphate + H(+) = UMP + CO2. The protein operates within pyrimidine metabolism; UMP biosynthesis via de novo pathway; UMP from orotate: step 2/2. Functionally, catalyzes the decarboxylation of orotidine 5'-monophosphate (OMP) to uridine 5'-monophosphate (UMP). In Streptococcus pyogenes serotype M49 (strain NZ131), this protein is Orotidine 5'-phosphate decarboxylase.